The following is a 1734-amino-acid chain: MMVFQSFILGNLVSLCMKIINSVVVVGLYYGFLTTFSIGPSYLFLLRARVMDEGEEGTEKKVSATTGFIAGQLMMFISIYYAPLHLALGRPHTITVLALPYLLFHFFWNNHKHFLDYGSTTRNEMRNLRIQCVFLNNLIFQLFNHFILPSSMLARLVNIYMFRCNNKMLFVTSSFVGWLIGHILFMKWVGLVLVWIQQNNSIRSNVLIRSNKYKFLVSELRNSMARIFSILLFITCVYYLGRMPSPIFTKKLKGTSETEERGGTKQDQEVSIEEAPFPSLFLDGNKENSNLEFFKIKKKEDYCLWFEKPFVTLVFDYKRWNRPNRYIKNDKIENTVRNEMSQYFFYTCQSDGKERISFTYPPSLSTFFEMIQKKIPSFTREKTASTQVSTYWSLINEEKKENLKKELLNRIEALDKGWSVENILEKTTRFCHNETKKEYLPKIYDPSLHGISRGRIKKLPPFKIITETYITNNIGGSWINKIHGILLKINYQKFEQTLEKFNRKSLSIEKKLYFFSEPQEEKIHSEEELKIFKFLFNVVRTDSNDQTLNRTNFIDFHEITKKVPRWSYKLIGELEELEGENEDNVPMEPGIRSRKGKRVVIFTDNQNSDQNDEMALIRYSQQSDFRREIIKGSMRSQRRKTVIWEFFQAKVHSPLFFDRIDKLFLFSFDIRGLKKKILRNFMWKNKKKKKIDKKEEEQSKIEEKRRIEIAETWDSFLFAQIIRGFLLITQSILRKYIILPLLIIMKNSVRMLLFQIPEWSEDLKDWKREMHVKCTYNGVQLSETEFPRNWLTDGIQIKILFPFYLKPWHKSKFQSSQKARLKKTKAKGEKNAFCFLTVWGMETELPFGSAQRKPSFFQPISKELKKRIKKLKTKPFLVLGIFKERATICLKVAKEIKNWILKNSLFIKVKRKNLSKPNKIPVFGPREIFELNETKKDSIMSNQMIYELSVQNKSMEWRNSSLSENKIKNLIDRIKTIRNQIEEISKEKENLTNSCNKLRYDSKIIESAKRIWQIFKRKNTRFIRKSIFFIKFCIEQLSIAIFLGISNIPRITTQLFFESTKTILNKYIYKNEEKVEKINKKKNTIYFISTIKNLISNKKKISYDLCSLSQAYVFYKLSQIQVSNFSKLKAVLEYNICITSFFVKNQIKDFFQEQGIFHYELKDKTFFNSEVNQWKNWLRSHYQYNLPQVAWARLVTQKWKTKITQDSLVLNPSLTKEDSYEKKKFDNSKKDNFFEANLLLNPKHNLKKDSIYNLFCYKSINSTEKKFDMSIGIALDNCLVSCFLEKYNIRGTGEIRHRKYLDWRILNFWFTKKVNIEPWVDTKSKKKYINTKVQNYQRIDKITKTSLANQKRNFFDWMGMNEEILNPCITNFEFFFFPEFLLFSSTYKTKPWVIPIKLLLFNFNENINVNKKITRKKTSFIPSNENKSLLFYNLNNEEKELADEVELESDNEKQINPESALSNQEKTIQEIYAESKKKKRQNKKQSKSNTEVELDLFLTRHSRFQLRWNCFFNQKILNNVKVYCLLIRLKNPNEIAISSIERGEMSLDILMIEKNFTLAKLMKKGILIIEPVRLSVQNNGQLIIYRTIGISLVQKNKHKISKRYKKKIEKSITKYQKKTVNRKKNHYDFFVPENILSPKRRREFRILICFNLKKKNASDRNSRFDKNIQNLTTVLHKKKDLDKDQNNLIKFKSFLWPNFRLEDLACMNRYWFNTTNGNHFSMIRIHMYTRFPIH.

The next 6 helical transmembrane spans lie at 19 to 39 (IINS…FSIG), 68 to 88 (FIAG…HLAL), 91 to 111 (PHTI…WNNH), 133 to 153 (VFLN…SSML), 176 to 196 (VGWL…LVWI), and 227 to 247 (IFSI…PSPI). The stretch at 1433–1485 (NLNNEEKELADEVELESDNEKQINPESALSNQEKTIQEIYAESKKKKRQNKKQ) forms a coiled coil.

It belongs to the TIC214 family. As to quaternary structure, part of the Tic complex.

The protein localises to the plastid. It is found in the chloroplast inner membrane. Functionally, involved in protein precursor import into chloroplasts. May be part of an intermediate translocation complex acting as a protein-conducting channel at the inner envelope. This is Protein TIC 214 from Lepidium virginicum (Virginia pepperweed).